The following is a 404-amino-acid chain: Putative arginine deiminase (404 aa).

Residue Cys-394 is the Amidino-cysteine intermediate of the active site.

This sequence belongs to the arginine deiminase family.

The protein resides in the cytoplasm. It carries out the reaction L-arginine + H2O = L-citrulline + NH4(+). It functions in the pathway amino-acid degradation; L-arginine degradation via ADI pathway; carbamoyl phosphate from L-arginine: step 1/2. This is Putative arginine deiminase (arcA) from Mycoplasma pneumoniae (strain ATCC 29342 / M129 / Subtype 1) (Mycoplasmoides pneumoniae).